A 248-amino-acid polypeptide reads, in one-letter code: Probable transcriptional regulatory protein PSPTO_3980 (248 aa).

Belongs to the TACO1 family.

The protein resides in the cytoplasm. The protein is Probable transcriptional regulatory protein PSPTO_3980 of Pseudomonas syringae pv. tomato (strain ATCC BAA-871 / DC3000).